Consider the following 408-residue polypeptide: MSDIKKVVLAYSGGLDTSVILKWLQDNYDAEVVTFTADIGQGEELEPARKKALQLGIKPENIFIEDLREEFVRDFVFPMFRANTIYEGEYLLGTSIARPLIAKRQIEIARATGAQAVSHGATGKGNDQVRFELGYYALEPGIKVIAPWREWDLLSREKLLAYAEKAGIPIEMKHKQGGAPYSMDANLLHISFEGRHLEDPKAEAEADMWRWTVSPEEAPDQAEYLDIEYEHGDPVAINGKRLSPAEMLTELNRLGGKHGIGRLDLVENRYVGMKSRGCYETPGGTIMLKAHRGIESITLDREVAHLKDDLMPRYAALIYNGYWWSPERRALQVLIDHTQEKVNGWVRVKLYKGSVSVVARDSKETLFDKTIATFDDDGGAYNQADAGGFIKLNALRMRIAENARRQRG.

ATP is bound by residues 10 to 18 and alanine 37; that span reads AYSGGLDTS. Tyrosine 90 and serine 95 together coordinate L-citrulline. An ATP-binding site is contributed by glycine 120. Residues threonine 122, asparagine 126, and aspartate 127 each coordinate L-aspartate. Asparagine 126 lines the L-citrulline pocket. The L-citrulline site is built by arginine 130, serine 182, serine 191, glutamate 267, and tyrosine 279.

Belongs to the argininosuccinate synthase family. Type 1 subfamily. Homotetramer.

It is found in the cytoplasm. It catalyses the reaction L-citrulline + L-aspartate + ATP = 2-(N(omega)-L-arginino)succinate + AMP + diphosphate + H(+). It participates in amino-acid biosynthesis; L-arginine biosynthesis; L-arginine from L-ornithine and carbamoyl phosphate: step 2/3. The polypeptide is Argininosuccinate synthase (Paraburkholderia xenovorans (strain LB400)).